The sequence spans 123 residues: Protein lgg-1 (123 aa).

G116 is lipidated: Phosphatidylethanolamine amidated glycine. Residues 117–123 (GEVEKKE) constitute a propeptide, removed in mature form.

It belongs to the ATG8 family. Interacts with sepa-1 (via the LIR motifs); the interaction is direct. Interacts with allo-1 (via the LIR motif). Interacts with sqst-1 (via the LIR motifs); the interaction is direct. Both lipidated and unlipidated forms interact with epg-7 (via the LIR motif); the interaction is direct. Interacts with epg-2 (via the LIR motifs); the interaction is direct. Interacts with atg-13; the interaction is direct. Interacts with unc-51 (via the LIR motif); the interaction is direct. Interacts with atg-7; the interaction is direct. Interacts with atg-3. The interaction with atg-7 and atg-3 may be required for the lipidation of lgg-1. Post-translationally, cleaved by atg-4.1 and/or atg-4.2, after Gly-116 to form a thioester bond with 'Cys-523' of atg-7 (E1-like activating enzyme) before being transferred to 'Cys-255' of atg-3 (E2 conjugating enzyme), in order to be amidated with phosphatidylethanolamine. This lipid modification anchors lgg-1 to membranes and can be reversed by atg-4.2, releasing soluble lgg-1. C-terminal cleavage is essential for autophagosome initiation and biogenesis. Lipidation is not essential for autophagy or development but the lipidated form is involved in cargo recognition and autophagosome biogenesis. Lipidation regulates lgg-2-positive autophagosome formation. Expressed in PLML touch receptor neuron and in the ventral nerve cord. Expressed in AIY interneurons.

Its subcellular location is the preautophagosomal structure. The protein resides in the cytoplasmic vesicle. The protein localises to the autophagosome. It is found in the autophagosome membrane. It localises to the lysosome lumen. Its subcellular location is the mitochondrion. The protein resides in the cytoplasm. The protein localises to the phagosome membrane. It is found in the cell membrane. It localises to the cell projection. Its subcellular location is the dendrite. The protein resides in the perikaryon. Its function is as follows. Ubiquitin-like modifier involved in the formation of autophagosomal vacuoles (autophagosomes). When lipidated mediates tethering between adjacent membranes and stimulates membrane fusion during autophagy. Recruits lipidated-lgg-2 to maturing autophagosomes. Acts in the aggrephagy pathway, which is the macroautophagic degradation of ubiquitinated protein aggregates, and preferentially interacts with autophagy proteins and substrates containing LIR motifs to mediate autophagosome formation and protein aggregate degradation. In particular, binds to components of the unc-51-atg-13 complex to regulate autophagosome formation and cargo sequestration. Required for the degradation of specific sepa-1- and sqst-1-containing protein aggregates during embryogenesis. Involved in allophagy, which is an autophagic process in which paternal mitochondria and organelles are degraded during fertilization, and moreover is required for the formation of lgg-2-positive allophagic autophagosomes in embryos. Involved in the clearance of apoptotic cells by promoting the delivery of engulfed apoptotic cells to the lysosome. Plays a role in the distribution and clearance of germ cell specific P-granules from somatic cells. Also plays a role in the autophagy-mediated degradation of ribosomal RNA and ribosomal proteins in lysosomes. Involved in xenophagy, the autophagy-mediated degradation of pathogens and pathogen products, such as toxins. Required for normal survival when exposed to pathogenic bacteria S.typhimurium probably by promoting autophagic degradation of intracellular S.typhimurium. Also plays a role in membrane-pore repair. Plays a role in mitophagy. Essential for dauer development and longevity, including longevity in response to moderate, short-term heat shock, also known as a hormetic heat shock. The chain is Protein lgg-1 from Caenorhabditis elegans.